The sequence spans 465 residues: Ribulose bisphosphate carboxylase large chain (465 aa).

Residue Lys-4 is modified to N6,N6,N6-trimethyllysine. Substrate is bound by residues Asn-113 and Thr-163. Lys-165 (proton acceptor) is an active-site residue. A substrate-binding site is contributed by Lys-167. Mg(2+)-binding residues include Lys-191, Asp-193, and Glu-194. Lys-191 carries the post-translational modification N6-carboxylysine. His-284 (proton acceptor) is an active-site residue. Residues Arg-285, His-317, and Ser-369 each contribute to the substrate site.

This sequence belongs to the RuBisCO large chain family. Type I subfamily. As to quaternary structure, heterohexadecamer of 8 large chains and 8 small chains; disulfide-linked. The disulfide link is formed within the large subunit homodimers. Requires Mg(2+) as cofactor. The disulfide bond which can form in the large chain dimeric partners within the hexadecamer appears to be associated with oxidative stress and protein turnover.

Its subcellular location is the plastid. It localises to the chloroplast. It carries out the reaction 2 (2R)-3-phosphoglycerate + 2 H(+) = D-ribulose 1,5-bisphosphate + CO2 + H2O. The enzyme catalyses D-ribulose 1,5-bisphosphate + O2 = 2-phosphoglycolate + (2R)-3-phosphoglycerate + 2 H(+). In terms of biological role, ruBisCO catalyzes two reactions: the carboxylation of D-ribulose 1,5-bisphosphate, the primary event in carbon dioxide fixation, as well as the oxidative fragmentation of the pentose substrate in the photorespiration process. Both reactions occur simultaneously and in competition at the same active site. The protein is Ribulose bisphosphate carboxylase large chain of Ephedra tweediana (Vining horsetail).